The following is a 249-amino-acid chain: NADH dehydrogenase [ubiquinone] flavoprotein 2, mitochondrial (249 aa).

A mitochondrion-targeting transit peptide spans 1–32 (MFFSAALRARAAGLTAQWGRHVRNLHKTAMQN). At lysine 61 the chain carries N6-acetyllysine. 4 residues coordinate [2Fe-2S] cluster: cysteine 135, cysteine 140, cysteine 176, and cysteine 180. The residue at position 193 (tyrosine 193) is a Phosphotyrosine; by SRC. The tract at residues 213–249 (IPKPGPRSGRFSCEPAGGLTSLTEPPKGPGFGVQAGL) is disordered.

Belongs to the complex I 24 kDa subunit family. Core subunit of respiratory chain NADH dehydrogenase (Complex I) which is composed of 45 different subunits. This is a component of the flavoprotein-sulfur (FP) fragment of the enzyme. Requires [2Fe-2S] cluster as cofactor.

It localises to the mitochondrion inner membrane. The catalysed reaction is a ubiquinone + NADH + 5 H(+)(in) = a ubiquinol + NAD(+) + 4 H(+)(out). In terms of biological role, core subunit of the mitochondrial membrane respiratory chain NADH dehydrogenase (Complex I) which catalyzes electron transfer from NADH through the respiratory chain, using ubiquinone as an electron acceptor. Parts of the peripheral arm of the enzyme, where the electrons from NADH are accepted by flavin mononucleotide (FMN) and then passed along a chain of iron-sulfur clusters by electron tunnelling to the final acceptor ubiquinone. Contains one iron-sulfur cluster. This chain is NADH dehydrogenase [ubiquinone] flavoprotein 2, mitochondrial, found in Gorilla gorilla gorilla (Western lowland gorilla).